Reading from the N-terminus, the 321-residue chain is NADH-ubiquinone oxidoreductase chain 1 (321 aa).

The next 8 membrane-spanning stretches (helical) occupy residues 7–27 (ITNS…LTLM), 73–93 (ILLI…WTPI), 104–124 (LGLL…LWAG), 148–168 (VTLG…TMQL), 175–195 (HTWL…STLA), 227–247 (FFLA…ILFI), 256–276 (ELFL…FLWI), and 297–317 (LPLT…ISGI).

This sequence belongs to the complex I subunit 1 family.

It is found in the mitochondrion inner membrane. The enzyme catalyses a ubiquinone + NADH + 5 H(+)(in) = a ubiquinol + NAD(+) + 4 H(+)(out). Functionally, core subunit of the mitochondrial membrane respiratory chain NADH dehydrogenase (Complex I) that is believed to belong to the minimal assembly required for catalysis. Complex I functions in the transfer of electrons from NADH to the respiratory chain. The immediate electron acceptor for the enzyme is believed to be ubiquinone. The sequence is that of NADH-ubiquinone oxidoreductase chain 1 (MT-ND1) from Varanus dumerilii (Dumeril's monitor).